Here is a 467-residue protein sequence, read N- to C-terminus: Argininosuccinate lyase (467 aa).

The protein belongs to the lyase 1 family. Argininosuccinate lyase subfamily.

The protein localises to the cytoplasm. The catalysed reaction is 2-(N(omega)-L-arginino)succinate = fumarate + L-arginine. Its pathway is amino-acid biosynthesis; L-arginine biosynthesis; L-arginine from L-ornithine and carbamoyl phosphate: step 3/3. The sequence is that of Argininosuccinate lyase from Rhizobium etli (strain CIAT 652).